Consider the following 661-residue polypeptide: Immunoglobulin-like domain-containing receptor 2 (661 aa).

The N-terminal stretch at 1–35 is a signal peptide; the sequence is MPAFPTLDLDGKLGKMDRVVLGWTAVFWLTAMVEG. Residues 36-177 form the Ig-like V-type domain; it reads LQVTVPDKKK…LEGKNEDSVE (142 aa). The Lumenal segment spans residues 36 to 201; sequence LQVTVPDKKK…PSFAVEIMPE (166 aa). Cysteines 57 and 160 form a disulfide. The chain crosses the membrane as a helical span at residues 202–222; it reads WVFVGLVILGIFLFFVLVGIC. The Cytoplasmic segment spans residues 223-661; the sequence is WCQCCPHSCC…DFPTRMSLVV (439 aa). Disordered stretches follow at residues 288 to 310, 410 to 429, and 453 to 661; these read LMDK…HSVR, EDRE…MLSR, and QRSR…SLVV. 2 stretches are compositionally biased toward basic and acidic residues: residues 410–428 and 463–478; these read EDRE…EMLS and HEAR…ESRA. A Phosphoserine modification is found at Ser487. A compositionally biased stretch (basic and acidic residues) spans 491–506; that stretch reads YYGRGRSREPPGDGER. Arg559 carries the post-translational modification Omega-N-methylarginine. Ser594 carries the post-translational modification Phosphoserine. A compositionally biased stretch (acidic residues) spans 595–607; the sequence is EGEDEDDAADEDA. Positions 628-639 are enriched in basic and acidic residues; it reads RGRDLSFHSNSE.

The protein belongs to the immunoglobulin superfamily. LISCH7 family. Interacts with MARVELD2 and OCLN. Interacts with P4HB and HSPA5; the interaction with HSPA5 stabilizes ILDR2 expression. Interacts (via C-terminus) with TRA2A, TRA2B and SRSF1. Expressed in epithelial tissues, mainly in liver, kidney and colon.

The protein resides in the endoplasmic reticulum membrane. Its subcellular location is the cell junction. The protein localises to the tight junction. It localises to the nucleus. May be involved in ER stress pathways with effects on lipid homeostasis and insulin secretion. With ILDR1 and LSR, involved in the maintain of the epithelial barrier function through the recruitment of MARVELD2/tricellulin to tricellular tight junctions. Also functions as a B7-like protein family member expressed on immune cells and inflamed tissue and with T-cell inhibitory activity. In the inner ear, may regulate alternative pre-mRNA splicing via binding to TRA2A, TRA2B and SRSF1. This chain is Immunoglobulin-like domain-containing receptor 2, found in Mus musculus (Mouse).